The chain runs to 156 residues: Small ribosomal subunit protein uS7 (156 aa).

Belongs to the universal ribosomal protein uS7 family. In terms of assembly, part of the 30S ribosomal subunit. Contacts proteins S9 and S11.

Functionally, one of the primary rRNA binding proteins, it binds directly to 16S rRNA where it nucleates assembly of the head domain of the 30S subunit. Is located at the subunit interface close to the decoding center, probably blocks exit of the E-site tRNA. The sequence is that of Small ribosomal subunit protein uS7 from Neisseria gonorrhoeae (strain ATCC 700825 / FA 1090).